We begin with the raw amino-acid sequence, 458 residues long: Dihydrolipoyllysine-residue acetyltransferase component of pyruvate dehydrogenase complex, mitochondrial (458 aa).

The transit peptide at M1–Y28 directs the protein to the mitochondrion. The Lipoyl-binding domain occupies H34 to V110. K75 is subject to N6-lipoyllysine. Residues D126–F164 form a disordered region. In terms of domain architecture, Peripheral subunit-binding (PSBD) spans N177–L214. Active-site residues include H431 and D435.

Belongs to the 2-oxoacid dehydrogenase family. It depends on (R)-lipoate as a cofactor.

It is found in the mitochondrion matrix. The enzyme catalyses N(6)-[(R)-dihydrolipoyl]-L-lysyl-[protein] + acetyl-CoA = N(6)-[(R)-S(8)-acetyldihydrolipoyl]-L-lysyl-[protein] + CoA. In terms of biological role, the pyruvate dehydrogenase complex catalyzes the overall conversion of pyruvate to acetyl-CoA and CO(2). It contains multiple copies of three enzymatic components: pyruvate dehydrogenase (E1), dihydrolipoamide acetyltransferase (E2) and lipoamide dehydrogenase (E3). In Neurospora crassa (strain ATCC 24698 / 74-OR23-1A / CBS 708.71 / DSM 1257 / FGSC 987), this protein is Dihydrolipoyllysine-residue acetyltransferase component of pyruvate dehydrogenase complex, mitochondrial (mrp-3).